Reading from the N-terminus, the 515-residue chain is Arabinose import ATP-binding protein AraG 2 (515 aa).

Residues 1-22 (MTMQTMTAASGHDAEAGTPPDG) are disordered. 2 ABC transporter domains span residues 25–260 (LALD…MVGR) and 260–511 (RSIE…LIKL). ATP is bound at residue 57–64 (GENGAGKS).

This sequence belongs to the ABC transporter superfamily. Arabinose importer (TC 3.A.1.2.2) family. As to quaternary structure, the complex is composed of two ATP-binding proteins (AraG), two transmembrane proteins (AraH) and a solute-binding protein (AraF).

It is found in the cell inner membrane. The catalysed reaction is L-arabinose(out) + ATP + H2O = L-arabinose(in) + ADP + phosphate + H(+). Part of the ABC transporter complex AraFGH involved in arabinose import. Responsible for energy coupling to the transport system. The polypeptide is Arabinose import ATP-binding protein AraG 2 (Burkholderia cenocepacia (strain HI2424)).